A 138-amino-acid polypeptide reads, in one-letter code: Basic phospholipase A2 ammodytoxin A (138 aa).

The signal sequence occupies residues 1–16 (MRTLWIVAVCLIGVEG). 7 cysteine pairs are disulfide-bonded: Cys-42–Cys-131, Cys-44–Cys-60, Cys-59–Cys-111, Cys-65–Cys-138, Cys-66–Cys-104, Cys-73–Cys-97, and Cys-91–Cys-102. Ca(2+)-binding residues include Tyr-43, Gly-45, and Gly-47. His-63 is an active-site residue. Residue Asp-64 coordinates Ca(2+). Residue Asp-105 is part of the active site.

The protein belongs to the phospholipase A2 family. Group II subfamily. D49 sub-subfamily. In terms of assembly, monomer. Binds to calmodulin, coagulation factor X (F10), M-type PLA2 receptor (R-180). May also bind to 14-3-3 proteins gamma (YWHAG) and epsilon (YWHAE), and R25, a mitochondrial membrane protein. It depends on Ca(2+) as a cofactor. In terms of tissue distribution, expressed by the venom gland.

It localises to the secreted. The protein resides in the host cytoplasm. Its subcellular location is the host cytosol. It catalyses the reaction a 1,2-diacyl-sn-glycero-3-phosphocholine + H2O = a 1-acyl-sn-glycero-3-phosphocholine + a fatty acid + H(+). Functionally, snake venom phospholipase A2 (PLA2) that acts as a presynaptic neurotoxin, an inhibitor of blood coagulation, and has been found to bind with high affinity to intracellular proteins. The response of indirectly stimulated neuromuscular preparations to ammodytoxin (Atx) is triphasic. The first phase, the transient inhibition of the acetylcholine (ACh) release, starts soon after the addition of Atx and lasts for several minutes. This phase is probably independent of Atx enzymatic activity. The effect may be due to the specific binding of the toxin to presynaptic receptors. These receptors, called N-type receptors, are still unidentified. It is noteworthy that a neuronal isoform of the M-type PLA2 receptor (R180) has been identified as a high-affinity receptor for Atx in neuronal plasma membranes. It was demonstrated however that this receptor is not essential for expression of neurotoxicity by Atx. The second phase corresponds to an augmentation of neurotransmitter release. A peak is reached 10-20 minutes after exposure of the preparation to Atx and is followed by a gradual reduction. In this phase, the enzymatic activity of Atx of the mammalian is not significant. It is speculated that the increased release of neurotransmitter in this phase is induced by the interference of Atx with voltage-gated potassium channels. Measurements of ionic currents showed however that voltage-gated potassium channels are not affected by Atx. The third phase of the response of neuromuscular preparations to Atx, which corresponds to a complete and irreversible paralysis, is clearly dependent on the hydrolytic activity of the toxin. In addition to its presynaptic neurotoxicity, Atx shows an anticoagulant activity by binding with high affinity to activated coagulation factor X (F10) thus inhibiting the formation of the prothrombinase complex (FX/FV) and its activity (IC(50) is 20 nM). Surprisingly, Atx was discovered to bind intracellular proteins such as calmodulin (CaM) (IC(50) is 6 nM), 14-3-3 proteins gamma (YWHAG) and epsilon (YWHAE) (by similarity with AtxC), as well as R25 (by similarity with AtxC), a mitochondrial integral membrane protein found in cerebral cortex. These findings raised a doubt about the dogma of the exclusively extracellular action of PLA2s, defended by the potential instability of these molecules in the reducing environment of the eukaryotic cytosol coupled with their possible inability to act as enzymes in this cellular compartment, due to too low concentration of calcium ions. This hypothesis was challenged efficiently by demonstrating the internalization of AtxA into a culture cells, but still remains to be directly demonstrated in vivo. PLA2 catalyzes the calcium-dependent hydrolysis of the 2-acyl groups in 3-sn-phosphoglycerides. This chain is Basic phospholipase A2 ammodytoxin A, found in Vipera ammodytes ammodytes (Western sand viper).